A 284-amino-acid chain; its full sequence is Sulfotransferase 4A1 (284 aa).

Phosphothreonine is present on residues Thr-8, Thr-11, and Thr-205.

It belongs to the sulfotransferase 1 family. In terms of tissue distribution, expressed in brain, cerebellum and hypothalamus. Not detected in pancreas, liver, lung, intestine, kidney, uterus, adrenal gland, thymus, spleen, epididymis, testicle, and heart.

The protein localises to the cytoplasm. Atypical sulfotransferase family member with very low affinity for 3'-phospho-5'-adenylyl sulfate (PAPS) and very low catalytic activity towards L-triiodothyronine, thyroxine, estrone, p-nitrophenol, 2-naphthylamine, and 2-beta-naphthol. May have a role in the metabolism of drugs and neurotransmitters in the CNS. The chain is Sulfotransferase 4A1 (Sult4a1) from Mus musculus (Mouse).